Consider the following 210-residue polypeptide: Glycerol-3-phosphate acyltransferase (210 aa).

5 consecutive transmembrane segments (helical) span residues 4 to 24 (LIVAVVAYLIGSVSFAVIVSA), 52 to 72 (AAILTLIGDAFKGWLAVWLTG), 82 to 102 (DTSVAIAAIAVFLGHLYPVFF), 118 to 138 (LAINPILGIATLLTWLIVAFF), and 159 to 179 (FLFGANVIALSIVAMSALLIW).

This sequence belongs to the PlsY family. In terms of assembly, probably interacts with PlsX.

Its subcellular location is the cell inner membrane. The enzyme catalyses an acyl phosphate + sn-glycerol 3-phosphate = a 1-acyl-sn-glycero-3-phosphate + phosphate. Its pathway is lipid metabolism; phospholipid metabolism. Functionally, catalyzes the transfer of an acyl group from acyl-phosphate (acyl-PO(4)) to glycerol-3-phosphate (G3P) to form lysophosphatidic acid (LPA). This enzyme utilizes acyl-phosphate as fatty acyl donor, but not acyl-CoA or acyl-ACP. This chain is Glycerol-3-phosphate acyltransferase, found in Paraburkholderia phymatum (strain DSM 17167 / CIP 108236 / LMG 21445 / STM815) (Burkholderia phymatum).